Here is a 270-residue protein sequence, read N- to C-terminus: Putative pyruvate, phosphate dikinase regulatory protein (270 aa).

148–155 (GVSRTSKT) is a binding site for ADP.

This sequence belongs to the pyruvate, phosphate/water dikinase regulatory protein family. PDRP subfamily.

The catalysed reaction is N(tele)-phospho-L-histidyl/L-threonyl-[pyruvate, phosphate dikinase] + ADP = N(tele)-phospho-L-histidyl/O-phospho-L-threonyl-[pyruvate, phosphate dikinase] + AMP + H(+). It catalyses the reaction N(tele)-phospho-L-histidyl/O-phospho-L-threonyl-[pyruvate, phosphate dikinase] + phosphate + H(+) = N(tele)-phospho-L-histidyl/L-threonyl-[pyruvate, phosphate dikinase] + diphosphate. Functionally, bifunctional serine/threonine kinase and phosphorylase involved in the regulation of the pyruvate, phosphate dikinase (PPDK) by catalyzing its phosphorylation/dephosphorylation. The chain is Putative pyruvate, phosphate dikinase regulatory protein from Bacillus cereus (strain B4264).